The sequence spans 258 residues: uncharacterized protein (258 aa).

The first 19 residues, 1–19 (MVGILPLCCSGCVPSLCCS), serve as a signal peptide directing secretion. 3 helical membrane-spanning segments follow: residues 94–114 (GLLL…NWTG), 197–217 (CLIL…LPYI), and 219–239 (PGLS…SSLV).

The protein localises to the membrane. This is an uncharacterized protein from Homo sapiens (Human).